Here is a 148-residue protein sequence, read N- to C-terminus: MLRLLSKRFYCKIATKSNEKATKLDFKQLTHPTKVPQTPVDAEFPDTSASEIQIDTKTIQLLERLSLVDLDSERALATLKSSIQFADKIAHINTDHVRPLYTVLEHQQLQLRNDQVTEGDCRAEVLRNAKVTDEDYYVSPPGNIPLEQ.

Belongs to the GatC family. As to quaternary structure, subunit of the heterotrimeric GatCAB amidotransferase (AdT) complex, composed of A, B and C subunits.

The protein localises to the mitochondrion. It catalyses the reaction L-glutamyl-tRNA(Gln) + L-glutamine + ATP + H2O = L-glutaminyl-tRNA(Gln) + L-glutamate + ADP + phosphate + H(+). Its function is as follows. Allows the formation of correctly charged Gln-tRNA(Gln) through the transamidation of misacylated Glu-tRNA(Gln) in the mitochondria. The reaction takes place in the presence of glutamine and ATP through an activated gamma-phospho-Glu-tRNA(Gln). The protein is Glutamyl-tRNA(Gln) amidotransferase subunit C, mitochondrial of Drosophila simulans (Fruit fly).